Here is a 127-residue protein sequence, read N- to C-terminus: Ribonuclease P protein component (127 aa).

It belongs to the RnpA family. As to quaternary structure, consists of a catalytic RNA component (M1 or rnpB) and a protein subunit.

The enzyme catalyses Endonucleolytic cleavage of RNA, removing 5'-extranucleotides from tRNA precursor.. Functionally, RNaseP catalyzes the removal of the 5'-leader sequence from pre-tRNA to produce the mature 5'-terminus. It can also cleave other RNA substrates such as 4.5S RNA. The protein component plays an auxiliary but essential role in vivo by binding to the 5'-leader sequence and broadening the substrate specificity of the ribozyme. The polypeptide is Ribonuclease P protein component (Agrobacterium fabrum (strain C58 / ATCC 33970) (Agrobacterium tumefaciens (strain C58))).